The following is a 464-amino-acid chain: Mannose-1-phosphate guanylyltransferase (464 aa).

The protein belongs to the mannose-6-phosphate isomerase type 2 family.

The catalysed reaction is alpha-D-mannose 1-phosphate + GTP + H(+) = GDP-alpha-D-mannose + diphosphate. It functions in the pathway nucleotide-sugar biosynthesis; GDP-alpha-D-mannose biosynthesis; GDP-alpha-D-mannose from alpha-D-mannose 1-phosphate (GTP route): step 1/1. It participates in bacterial outer membrane biogenesis; LPS O-antigen biosynthesis. In terms of biological role, involved in GDP-mannose biosynthesis which serves as the activated sugar nucleotide precursor for mannose residues in cell surface polysaccharides. This enzyme participates in synthesis of the LPS O7 antigen. The protein is Mannose-1-phosphate guanylyltransferase (manC) of Escherichia coli.